Here is a 384-residue protein sequence, read N- to C-terminus: Class V chitinase CHIT5a (384 aa).

The first 27 residues, Met-1–Ser-27, serve as a signal peptide directing secretion. Residues Asn-29, Asn-114, and Asn-133 are each glycosylated (N-linked (GlcNAc...) asparagine). Residues Gly-39–His-384 form the GH18 domain. The active-site Proton donor is Glu-152. N-linked (GlcNAc...) asparagine glycosylation is found at Asn-195 and Asn-234.

Belongs to the glycosyl hydrolase 18 family. Chitinase class V subfamily.

The enzyme catalyses Random endo-hydrolysis of N-acetyl-beta-D-glucosaminide (1-&gt;4)-beta-linkages in chitin and chitodextrins.. The protein operates within glycan degradation; chitin degradation. Possesses chitinase activity in vitro toward glycol chitin, carboxymethyl-chitin, colloidal chitin, and the chitin oligosaccharides (N-acetylglucosamine) (GlcNAc)6 and (GlcNAc)5. Hydrolyzes (GlcNAc)6 into (GlcNAc)4 and (GlcNAc)2, or two (GlcNAc)3 molecules. Has the capacity to inhibit hyphal growth of the fungus Trichoderma viride in an agar-plate bioassay. This is Class V chitinase CHIT5a from Medicago truncatula (Barrel medic).